The following is a 374-amino-acid chain: Aminomethyltransferase (374 aa).

This sequence belongs to the GcvT family. In terms of assembly, the glycine cleavage system is composed of four proteins: P, T, L and H.

It catalyses the reaction N(6)-[(R)-S(8)-aminomethyldihydrolipoyl]-L-lysyl-[protein] + (6S)-5,6,7,8-tetrahydrofolate = N(6)-[(R)-dihydrolipoyl]-L-lysyl-[protein] + (6R)-5,10-methylene-5,6,7,8-tetrahydrofolate + NH4(+). Functionally, the glycine cleavage system catalyzes the degradation of glycine. The chain is Aminomethyltransferase from Prochlorococcus marinus (strain MIT 9303).